The chain runs to 931 residues: MWGFWLLLFWGFSGMYRWGMTTLPTLGQTLGGVNECQDTTTCPAYATCTDTTDSYYCTCKRGFLSSNGQTNFQGPGVECQDVNECLQSDSPCGPNSVCTNILGRAKCSCLRGFSSSTGKDWILGSLDNFLCADVDECLTIGICPKYSNCSNSVGSYSCTCQPGFVLNGSICEDEDECVTRDVCPEHATCHNTLGSYYCTCNSGLESSGGGPMFQGLDESCEDVDECSRNSTLCGPTFICINTLGSYSCSCPAGFSLPTFQILGHPADGNCTDIDECDDTCPLNSSCTNTIGSYFCTCHPGFASSNGQLNFKDLEVTCEDIDECTQDPLQCGLNSVCTNVPGSYICGCLPDFQMDPEGSQGYGNFNCKRILFKCKEDLILQSEQIQQCQAVQGRDLGYASFCTLVNATFTILDNTCENKSAPVSLQSAATSVSLVLEQATTWFELSKEETSTLGTILLETVESTMLAALLIPSGNASQMIQTEYLDIESKVINEECKENESINLAARGDKMNVGCFIIKESVSTGAPGVAFVSFAHMESVLNERFFEDGQSFRKLRMNSRVVGGTVTGEKKEDFSKPIIYTLQHIQPKQKSERPICVSWNTDVEDGRWTPSGCEIVEASETHTVCSCNRMANLAIIMASGELTMEFSLYIISHVGTVISLVCLALAIATFLLCRAVQNHNTYMHLHLCVCLFLAKILFLTGIDKTDNQTACAIIAGFLHYLFLACFFWMLVEAVMLFLMVRNLKVVNYFSSRNIKMLHLCAFGYGLPVLVVIISASVQPRGYGMHNRCWLNTETGFIWSFLGPVCMIITINSVLLAWTLWVLRQKLCSVSSEVSKLKDTRLLTFKAIAQIFILGCSWVLGIFQIGPLASIMAYLFTIINSLQGAFIFLIHCLLNRQVRDEYKKLLTRKTDLSSHSQTSGILLSSMPSTSKMG.

A signal peptide spans 1-27 (MWGFWLLLFWGFSGMYRWGMTTLPTLG). The Extracellular segment spans residues 28–644 (QTLGGVNECQ…IMASGELTME (617 aa)). EGF-like domains lie at 32–80 (GVNE…VECQ) and 81–132 (DVNE…FLCA). 21 disulfides stabilise this stretch: Cys36–Cys48, Cys42–Cys57, Cys59–Cys79, Cys85–Cys98, Cys92–Cys107, Cys109–Cys131, Cys137–Cys149, Cys143–Cys158, Cys160–Cys171, Cys177–Cys189, Cys183–Cys198, Cys200–Cys220, Cys226–Cys239, Cys233–Cys248, Cys250–Cys270, Cys276–Cys286, Cys280–Cys295, Cys297–Cys317, Cys323–Cys336, Cys330–Cys345, and Cys347–Cys366. The region spanning 133 to 172 (DVDECLTIGICPKYSNCSNSVGSYSCTCQPGFVLNGSICE) is the EGF-like 3; calcium-binding domain. Asn148 and Asn167 each carry an N-linked (GlcNAc...) asparagine glycan. The region spanning 173–221 (DEDECVTRDVCPEHATCHNTLGSYYCTCNSGLESSGGGPMFQGLDESCE) is the EGF-like 4; calcium-binding domain. The EGF-like 5; calcium-binding domain maps to 222 to 271 (DVDECSRNSTLCGPTFICINTLGSYSCSCPAGFSLPTFQILGHPADGNCT). Asn229 carries N-linked (GlcNAc...) asparagine glycosylation. Residues Asn269 and Asn283 are each glycosylated (N-linked (GlcNAc...) asparagine). In terms of domain architecture, EGF-like 6; calcium-binding spans 272–318 (DIDECDDTCPLNSSCTNTIGSYFCTCHPGFASSNGQLNFKDLEVTCE). One can recognise an EGF-like 7; calcium-binding domain in the interval 319–367 (DIDECTQDPLQCGLNSVCTNVPGSYICGCLPDFQMDPEGSQGYGNFNCK). Asn405, Asn417, Asn474, and Asn498 each carry an N-linked (GlcNAc...) asparagine glycan. In terms of domain architecture, GAIN-B spans 482–642 (EYLDIESKVI…AIIMASGELT (161 aa)). The Cell attachment site signature appears at 506 to 508 (RGD). Cystine bridges form between Cys595/Cys624 and Cys612/Cys626. Residues 595 to 642 (CVSWNTDVEDGRWTPSGCEIVEASETHTVCSCNRMANLAIIMASGELT) form a GPS region. The chain crosses the membrane as a helical span at residues 645–672 (FSLYIISHVGTVISLVCLALAIATFLLC). Topologically, residues 673 to 679 (RAVQNHN) are cytoplasmic. The chain crosses the membrane as a helical span at residues 680–701 (TYMHLHLCVCLFLAKILFLTGI). Residues 702-711 (DKTDNQTACA) lie on the Extracellular side of the membrane. Asn706 carries N-linked (GlcNAc...) asparagine glycosylation. A helical transmembrane segment spans residues 712 to 735 (IIAGFLHYLFLACFFWMLVEAVML). The Cytoplasmic portion of the chain corresponds to 736–754 (FLMVRNLKVVNYFSSRNIK). The helical transmembrane segment at 755-776 (MLHLCAFGYGLPVLVVIISASV) threads the bilayer. Topologically, residues 777 to 792 (QPRGYGMHNRCWLNTE) are extracellular. The chain crosses the membrane as a helical span at residues 793–821 (TGFIWSFLGPVCMIITINSVLLAWTLWVL). Over 822–839 (RQKLCSVSSEVSKLKDTR) the chain is Cytoplasmic. A helical membrane pass occupies residues 840 to 859 (LLTFKAIAQIFILGCSWVLG). The Extracellular portion of the chain corresponds to 860-874 (IFQIGPLASIMAYLF). The chain crosses the membrane as a helical span at residues 875 to 897 (TIINSLQGAFIFLIHCLLNRQVR). The Cytoplasmic segment spans residues 898–931 (DEYKKLLTRKTDLSSHSQTSGILLSSMPSTSKMG).

The protein belongs to the G-protein coupled receptor 2 family. Adhesion G-protein coupled receptor (ADGR) subfamily. In terms of tissue distribution, in macrophages; but absent from those which are localized within T-cell areas of lymph nodes and spleen. Low level of expression on blood monocytes.

The protein resides in the cell membrane. Orphan receptor involved in cell adhesion and probably in cell-cell interactions specifically involving cells of the immune system. May play a role in regulatory T-cells (Treg) development. The protein is Adhesion G protein-coupled receptor E1 (Adgre1) of Mus musculus (Mouse).